The following is a 606-amino-acid chain: Aspartate--tRNA(Asp/Asn) ligase (606 aa).

Residue Glu-196 participates in L-aspartate binding. The interval 220 to 223 (QIFK) is aspartate. Arg-242 serves as a coordination point for L-aspartate. Residues 242–244 (RDE) and Gln-251 each bind ATP. His-465 provides a ligand contact to L-aspartate. Glu-499 contacts ATP. Arg-506 provides a ligand contact to L-aspartate. Position 551 to 554 (551 to 554 (GMDR)) interacts with ATP.

Belongs to the class-II aminoacyl-tRNA synthetase family. Type 1 subfamily. As to quaternary structure, homodimer.

It localises to the cytoplasm. The catalysed reaction is tRNA(Asx) + L-aspartate + ATP = L-aspartyl-tRNA(Asx) + AMP + diphosphate. Functionally, aspartyl-tRNA synthetase with relaxed tRNA specificity since it is able to aspartylate not only its cognate tRNA(Asp) but also tRNA(Asn). Reaction proceeds in two steps: L-aspartate is first activated by ATP to form Asp-AMP and then transferred to the acceptor end of tRNA(Asp/Asn). The sequence is that of Aspartate--tRNA(Asp/Asn) ligase from Oleidesulfovibrio alaskensis (strain ATCC BAA-1058 / DSM 17464 / G20) (Desulfovibrio alaskensis).